The sequence spans 285 residues: Alpha-acetolactate decarboxylase (285 aa).

Residues 1–25 (MKKNIITSITSLALVAGLSLTAFAA) form the signal peptide.

This sequence belongs to the alpha-acetolactate decarboxylase family.

It catalyses the reaction (2S)-2-acetolactate + H(+) = (R)-acetoin + CO2. Its pathway is polyol metabolism; (R,R)-butane-2,3-diol biosynthesis; (R,R)-butane-2,3-diol from pyruvate: step 2/3. Its function is as follows. Converts acetolactate into acetoin, which can be excreted by the cells. This may be a mechanism for controlling the internal pH of cells in the stationary stage. The chain is Alpha-acetolactate decarboxylase (aldB) from Brevibacillus brevis (Bacillus brevis).